Here is a 437-residue protein sequence, read N- to C-terminus: Ribosomal protein uS12 methylthiotransferase RimO (437 aa).

In terms of domain architecture, MTTase N-terminal spans 4–114 (PRISFVSLGC…VIEAVHTAIP (111 aa)). [4Fe-4S] cluster is bound by residues cysteine 13, cysteine 49, cysteine 78, cysteine 145, cysteine 149, and cysteine 152. Residues 131-369 (LTPRHYAYLK…MAKQQQISTH (239 aa)) enclose the Radical SAM core domain. The region spanning 372–437 (KKKIGKRLQV…DAYDLYGIAV (66 aa)) is the TRAM domain.

The protein belongs to the methylthiotransferase family. RimO subfamily. Requires [4Fe-4S] cluster as cofactor.

The protein resides in the cytoplasm. The enzyme catalyses L-aspartate(89)-[ribosomal protein uS12]-hydrogen + (sulfur carrier)-SH + AH2 + 2 S-adenosyl-L-methionine = 3-methylsulfanyl-L-aspartate(89)-[ribosomal protein uS12]-hydrogen + (sulfur carrier)-H + 5'-deoxyadenosine + L-methionine + A + S-adenosyl-L-homocysteine + 2 H(+). Catalyzes the methylthiolation of an aspartic acid residue of ribosomal protein uS12. This is Ribosomal protein uS12 methylthiotransferase RimO from Bartonella tribocorum (strain CIP 105476 / IBS 506).